The sequence spans 387 residues: Phosphoglycerate kinase (387 aa).

Substrate contacts are provided by residues 21–23, R36, 60–63, R114, and R147; these read DLN and HLGR. Residues K198, E313, and 339–342 each bind ATP; that span reads GGDT.

It belongs to the phosphoglycerate kinase family. In terms of assembly, monomer.

It localises to the cytoplasm. The enzyme catalyses (2R)-3-phosphoglycerate + ATP = (2R)-3-phospho-glyceroyl phosphate + ADP. It functions in the pathway carbohydrate degradation; glycolysis; pyruvate from D-glyceraldehyde 3-phosphate: step 2/5. In Baumannia cicadellinicola subsp. Homalodisca coagulata, this protein is Phosphoglycerate kinase.